Consider the following 825-residue polypeptide: KH domain-containing protein YLL032C (825 aa).

The KH domain maps to 482-556 (PAEESFFIPE…ANICLAKNDL (75 aa)). The segment covering 727–740 (SSKSNTSNSNTNGN) has biased composition (low complexity). The segment at 727–766 (SSKSNTSNSNTNGNFRSMNNAKSRTTIDNTSQSGASPQRH) is disordered. Residues 741–762 (FRSMNNAKSRTTIDNTSQSGAS) are compositionally biased toward polar residues. Ser762 is subject to Phosphoserine.

It is found in the cytoplasm. The sequence is that of KH domain-containing protein YLL032C from Saccharomyces cerevisiae (strain ATCC 204508 / S288c) (Baker's yeast).